The chain runs to 268 residues: Phosphate import ATP-binding protein PstB 2 (268 aa).

An ABC transporter domain is found at 22–263; it reads MALTGVNFYY…PKVKRTEDYI (242 aa). 54 to 61 contributes to the ATP binding site; the sequence is GPSGCGKS.

This sequence belongs to the ABC transporter superfamily. Phosphate importer (TC 3.A.1.7) family. The complex is composed of two ATP-binding proteins (PstB), two transmembrane proteins (PstC and PstA) and a solute-binding protein (PstS).

It localises to the cell inner membrane. The enzyme catalyses phosphate(out) + ATP + H2O = ADP + 2 phosphate(in) + H(+). In terms of biological role, part of the ABC transporter complex PstSACB involved in phosphate import. Responsible for energy coupling to the transport system. This chain is Phosphate import ATP-binding protein PstB 2, found in Rhizobium johnstonii (strain DSM 114642 / LMG 32736 / 3841) (Rhizobium leguminosarum bv. viciae).